Consider the following 194-residue polypeptide: Large ribosomal subunit protein uL10 (194 aa).

Residues 172–187 (EGGAAEAPAEAATEAP) are compositionally biased toward low complexity. The disordered stretch occupies residues 172-194 (EGGAAEAPAEAATEAPAEAEAES).

This sequence belongs to the universal ribosomal protein uL10 family. As to quaternary structure, part of the ribosomal stalk of the 50S ribosomal subunit. The N-terminus interacts with L11 and the large rRNA to form the base of the stalk. The C-terminus forms an elongated spine to which L12 dimers bind in a sequential fashion forming a multimeric L10(L12)X complex.

Its function is as follows. Forms part of the ribosomal stalk, playing a central role in the interaction of the ribosome with GTP-bound translation factors. This is Large ribosomal subunit protein uL10 from Rhodococcus erythropolis (strain PR4 / NBRC 100887).